Consider the following 205-residue polypeptide: MTPPERLFLPRVCGTTLHLLLLGLLLVLLPGAQGLPGVGLTPSAAQTARQHPKMHLAHSTLKPAAHLIGDPSKQNSLLWRANTDRAFLQDGFSLSNNSLLVPTSGIYFVYSQVVFSGKAYSPKATSSPLYLAHEVQLFSSQYPFHVPLLSSQKMVYPGLQEPWLHSMYHGAAFQLTQGDQLSTHTDGIPHLVLSPSTVFFGAFAL.

The signal sequence occupies residues Met-1 to Gly-34. The O-linked (GalNAc...) threonine; partial glycan is linked to Thr-41. The region spanning Pro-63–Leu-205 is the THD domain. Residue Asn-96 is glycosylated (N-linked (GlcNAc...) asparagine).

Belongs to the tumor necrosis factor family. Homotrimer, and heterotrimer of either two LTB and one LTA subunits or (less prevalent) two LTA and one LTB subunits. Interacts with TNFRSF14.

It is found in the secreted. The protein resides in the membrane. Cytokine that in its homotrimeric form binds to TNFRSF1A/TNFR1, TNFRSF1B/TNFBR and TNFRSF14/HVEM. In its heterotrimeric form with LTB binds to TNFRSF3/LTBR. Lymphotoxin is produced by lymphocytes and is cytotoxic for a wide range of tumor cells in vitro and in vivo. The protein is Lymphotoxin-alpha (LTA) of Homo sapiens (Human).